The following is a 137-amino-acid chain: Large ribosomal subunit protein uL16 (137 aa).

Belongs to the universal ribosomal protein uL16 family. Part of the 50S ribosomal subunit.

Its function is as follows. Binds 23S rRNA and is also seen to make contacts with the A and possibly P site tRNAs. This is Large ribosomal subunit protein uL16 from Baumannia cicadellinicola subsp. Homalodisca coagulata.